We begin with the raw amino-acid sequence, 543 residues long: CTP synthase (543 aa).

Positions 1–265 (MARYIFITGG…DDEVLAAFGI (265 aa)) are amidoligase domain. S13 provides a ligand contact to CTP. S13 is a binding site for UTP. ATP is bound at residue 14–19 (SLGKGL). An L-glutamine-binding site is contributed by Y54. D71 is an ATP binding site. Mg(2+) is bound by residues D71 and E139. CTP-binding positions include 146 to 148 (DIE), 186 to 191 (KTKPTQ), and K222. Residues 186–191 (KTKPTQ) and K222 each bind UTP. 238-240 (RDV) serves as a coordination point for ATP. The 252-residue stretch at 291-542 (TIAIVGKYTG…IQAAMVQSRL (252 aa)) folds into the Glutamine amidotransferase type-1 domain. G353 contributes to the L-glutamine binding site. The active-site Nucleophile; for glutamine hydrolysis is C380. Residues 381–384 (FGMQ), E404, and R470 each bind L-glutamine. Residues H515 and E517 contribute to the active site.

Belongs to the CTP synthase family. Homotetramer.

It catalyses the reaction UTP + L-glutamine + ATP + H2O = CTP + L-glutamate + ADP + phosphate + 2 H(+). It carries out the reaction L-glutamine + H2O = L-glutamate + NH4(+). The enzyme catalyses UTP + NH4(+) + ATP = CTP + ADP + phosphate + 2 H(+). The protein operates within pyrimidine metabolism; CTP biosynthesis via de novo pathway; CTP from UDP: step 2/2. Its activity is regulated as follows. Allosterically activated by GTP, when glutamine is the substrate; GTP has no effect on the reaction when ammonia is the substrate. The allosteric effector GTP functions by stabilizing the protein conformation that binds the tetrahedral intermediate(s) formed during glutamine hydrolysis. Inhibited by the product CTP, via allosteric rather than competitive inhibition. Functionally, catalyzes the ATP-dependent amination of UTP to CTP with either L-glutamine or ammonia as the source of nitrogen. Regulates intracellular CTP levels through interactions with the four ribonucleotide triphosphates. This chain is CTP synthase, found in Bradyrhizobium diazoefficiens (strain JCM 10833 / BCRC 13528 / IAM 13628 / NBRC 14792 / USDA 110).